Reading from the N-terminus, the 466-residue chain is Bifunctional protein GlmU (466 aa).

Residues 1–233 (MLHKSVLGLV…ADEAMGANDR (233 aa)) form a pyrophosphorylase region. UDP-N-acetyl-alpha-D-glucosamine-binding positions include 11-14 (LAAG), lysine 25, glutamine 79, and 84-85 (GT). Residue aspartate 108 coordinates Mg(2+). UDP-N-acetyl-alpha-D-glucosamine contacts are provided by glycine 143, glutamate 158, asparagine 173, and asparagine 231. Asparagine 231 contacts Mg(2+). The tract at residues 234–254 (AQLAALEAVYRQRKVQELFAQ) is linker. Residues 255-466 (GVTLIDPNRI…QKKKEHKNDA (212 aa)) are N-acetyltransferase. UDP-N-acetyl-alpha-D-glucosamine-binding residues include arginine 337 and lysine 355. The active-site Proton acceptor is histidine 367. Positions 370 and 381 each coordinate UDP-N-acetyl-alpha-D-glucosamine. Residues alanine 384, 390-391 (NY), serine 409, alanine 427, and arginine 444 each bind acetyl-CoA.

This sequence in the N-terminal section; belongs to the N-acetylglucosamine-1-phosphate uridyltransferase family. The protein in the C-terminal section; belongs to the transferase hexapeptide repeat family. Homotrimer. The cofactor is Mg(2+).

It localises to the cytoplasm. The enzyme catalyses alpha-D-glucosamine 1-phosphate + acetyl-CoA = N-acetyl-alpha-D-glucosamine 1-phosphate + CoA + H(+). It carries out the reaction N-acetyl-alpha-D-glucosamine 1-phosphate + UTP + H(+) = UDP-N-acetyl-alpha-D-glucosamine + diphosphate. It participates in nucleotide-sugar biosynthesis; UDP-N-acetyl-alpha-D-glucosamine biosynthesis; N-acetyl-alpha-D-glucosamine 1-phosphate from alpha-D-glucosamine 6-phosphate (route II): step 2/2. It functions in the pathway nucleotide-sugar biosynthesis; UDP-N-acetyl-alpha-D-glucosamine biosynthesis; UDP-N-acetyl-alpha-D-glucosamine from N-acetyl-alpha-D-glucosamine 1-phosphate: step 1/1. Its pathway is bacterial outer membrane biogenesis; LPS lipid A biosynthesis. Its function is as follows. Catalyzes the last two sequential reactions in the de novo biosynthetic pathway for UDP-N-acetylglucosamine (UDP-GlcNAc). The C-terminal domain catalyzes the transfer of acetyl group from acetyl coenzyme A to glucosamine-1-phosphate (GlcN-1-P) to produce N-acetylglucosamine-1-phosphate (GlcNAc-1-P), which is converted into UDP-GlcNAc by the transfer of uridine 5-monophosphate (from uridine 5-triphosphate), a reaction catalyzed by the N-terminal domain. The polypeptide is Bifunctional protein GlmU (Dichelobacter nodosus (strain VCS1703A)).